The following is a 637-amino-acid chain: Glutamate--cysteine ligase catalytic subunit (637 aa).

At M1 the chain carries N-acetylmethionine. Phosphoserine occurs at positions 5 and 8.

This sequence belongs to the glutamate--cysteine ligase type 3 family. In terms of assembly, heterodimer of a catalytic heavy chain and a regulatory light chain.

It catalyses the reaction L-cysteine + L-glutamate + ATP = gamma-L-glutamyl-L-cysteine + ADP + phosphate + H(+). The catalysed reaction is (2S)-2-aminobutanoate + L-glutamate + ATP = gamma-L-glutamyl-(2S)-2-aminobutanoate + ADP + phosphate + H(+). It functions in the pathway sulfur metabolism; glutathione biosynthesis; glutathione from L-cysteine and L-glutamate: step 1/2. Feedback inhibition by glutathione. Functionally, catalyzes the ATP-dependent ligation of L-glutamate and L-cysteine and participates in the first and rate-limiting step in glutathione biosynthesis. The protein is Glutamate--cysteine ligase catalytic subunit of Homo sapiens (Human).